The chain runs to 122 residues: Large ribosomal subunit protein uL14 (122 aa).

Belongs to the universal ribosomal protein uL14 family. In terms of assembly, part of the 50S ribosomal subunit. Forms a cluster with proteins L3 and L19. In the 70S ribosome, L14 and L19 interact and together make contacts with the 16S rRNA in bridges B5 and B8.

Functionally, binds to 23S rRNA. Forms part of two intersubunit bridges in the 70S ribosome. The sequence is that of Large ribosomal subunit protein uL14 from Burkholderia vietnamiensis (strain G4 / LMG 22486) (Burkholderia cepacia (strain R1808)).